Consider the following 366-residue polypeptide: Phospho-N-acetylmuramoyl-pentapeptide-transferase (366 aa).

The next 10 helical transmembrane spans lie at 27–47 (AALFTSALIVFLFGPTIINSL), 71–91 (TPTMGGLMILAGIVGASLLWA), 93–113 (LSNVYVVATLLVTLGFGAIGF), 134–154 (LGIEFVIAGIAVYFMMRTALA), 174–194 (FMINIGIMFVVFGGFVIVGAG), 205–225 (GLAIVPVMIAAASFGVIAYLA), 245–265 (LAVVLGAVIGAGLGFLWFNAP), 268–288 (AIFMGDTGSLALGGTIGTVAV), 294–314 (IVMAIIGGLFVMETLSVIIQV), and 343–363 (QVVIRFWIIAVGLAMLGLSTL).

The protein belongs to the glycosyltransferase 4 family. MraY subfamily. Mg(2+) is required as a cofactor.

Its subcellular location is the cell inner membrane. It catalyses the reaction UDP-N-acetyl-alpha-D-muramoyl-L-alanyl-gamma-D-glutamyl-meso-2,6-diaminopimeloyl-D-alanyl-D-alanine + di-trans,octa-cis-undecaprenyl phosphate = di-trans,octa-cis-undecaprenyl diphospho-N-acetyl-alpha-D-muramoyl-L-alanyl-D-glutamyl-meso-2,6-diaminopimeloyl-D-alanyl-D-alanine + UMP. Its pathway is cell wall biogenesis; peptidoglycan biosynthesis. Catalyzes the initial step of the lipid cycle reactions in the biosynthesis of the cell wall peptidoglycan: transfers peptidoglycan precursor phospho-MurNAc-pentapeptide from UDP-MurNAc-pentapeptide onto the lipid carrier undecaprenyl phosphate, yielding undecaprenyl-pyrophosphoryl-MurNAc-pentapeptide, known as lipid I. This is Phospho-N-acetylmuramoyl-pentapeptide-transferase from Rhizobium leguminosarum bv. trifolii (strain WSM2304).